Here is a 361-residue protein sequence, read N- to C-terminus: Innexin inx1 (361 aa).

Residues 1–28 (MYKLLGGLKEYLKWQDIVTDNAIFRLHN) lie on the Cytoplasmic side of the membrane. Residues 29–49 (LFTTVLLLTCSLIITATQYVG) traverse the membrane as a helical segment. The Extracellular segment spans residues 50-109 (NPIHCIVNGLPVRPINTYCWITSTFTMPDAFLRQVGSEVAHPGVANDFGDEDAKKYYTYY). A helical membrane pass occupies residues 110-130 (QWVCFVLFFQAMLCYTPKWIW). Residues 131–181 (DSIEGGLLRTLIMGLNRGLCQDDEKCMKKKALIEYLLRHIKRHNMYALKYW) are Cytoplasmic-facing. A helical transmembrane segment spans residues 182–202 (FCETLCLVNIIGQLYLMNHFF). Over 203-267 (DGEFFSYGLR…LPLNIVNEKT (65 aa)) the chain is Extracellular. The chain crosses the membrane as a helical span at residues 268–288 (YIFLWFWYIILAALLSVLVVY). At 289 to 361 (RAVILAVPSV…KIETPSSNNP (73 aa)) the chain is on the cytoplasmic side.

Belongs to the pannexin family. Expressed in embryonic neural precursors including the dorsal median neuroblast, glial cells, neuropilar glial ring, developing myoblasts cells and in a circumferential band of epithelial cells at the trochanter/coxa boundary stripe in the developing limb.

Its subcellular location is the cell membrane. The protein resides in the cell junction. It localises to the gap junction. In terms of biological role, structural components of the gap junctions. The chain is Innexin inx1 (inx1) from Schistocerca americana (American grasshopper).